The primary structure comprises 335 residues: Acetyl-coenzyme A carboxylase carboxyl transferase subunit alpha (335 aa).

A CoA carboxyltransferase C-terminal domain is found at 38-292 (TLEQKAEELR…ATALSEEIEN (255 aa)).

The protein belongs to the AccA family. In terms of assembly, acetyl-CoA carboxylase is a heterohexamer composed of biotin carboxyl carrier protein (AccB), biotin carboxylase (AccC) and two subunits each of ACCase subunit alpha (AccA) and ACCase subunit beta (AccD).

It is found in the cytoplasm. The enzyme catalyses N(6)-carboxybiotinyl-L-lysyl-[protein] + acetyl-CoA = N(6)-biotinyl-L-lysyl-[protein] + malonyl-CoA. Its pathway is lipid metabolism; malonyl-CoA biosynthesis; malonyl-CoA from acetyl-CoA: step 1/1. Component of the acetyl coenzyme A carboxylase (ACC) complex. First, biotin carboxylase catalyzes the carboxylation of biotin on its carrier protein (BCCP) and then the CO(2) group is transferred by the carboxyltransferase to acetyl-CoA to form malonyl-CoA. This chain is Acetyl-coenzyme A carboxylase carboxyl transferase subunit alpha, found in Heliobacterium modesticaldum (strain ATCC 51547 / Ice1).